Consider the following 847-residue polypeptide: Leucine--tRNA ligase (847 aa).

Positions 41-51 match the 'HIGH' region motif; sequence PYPSGRIHMGH. The 'KMSKS' region motif lies at 619-623; it reads KMSKS. K622 provides a ligand contact to ATP.

Belongs to the class-I aminoacyl-tRNA synthetase family.

Its subcellular location is the cytoplasm. The catalysed reaction is tRNA(Leu) + L-leucine + ATP = L-leucyl-tRNA(Leu) + AMP + diphosphate. The protein is Leucine--tRNA ligase of Cereibacter sphaeroides (strain KD131 / KCTC 12085) (Rhodobacter sphaeroides).